The sequence spans 98 residues: NADH-ubiquinone oxidoreductase chain 4L (98 aa).

The next 3 helical transmembrane spans lie at 1–21, 29–49, and 61–81; these read MSLTYMNMFMAFTISLLGLLM, SLLCLEGMMLSLFVMMTMVIL, and IILLVFAACEAALGLSLLVMV.

It belongs to the complex I subunit 4L family. In terms of assembly, core subunit of respiratory chain NADH dehydrogenase (Complex I) which is composed of 45 different subunits.

The protein localises to the mitochondrion inner membrane. The enzyme catalyses a ubiquinone + NADH + 5 H(+)(in) = a ubiquinol + NAD(+) + 4 H(+)(out). In terms of biological role, core subunit of the mitochondrial membrane respiratory chain NADH dehydrogenase (Complex I) which catalyzes electron transfer from NADH through the respiratory chain, using ubiquinone as an electron acceptor. Part of the enzyme membrane arm which is embedded in the lipid bilayer and involved in proton translocation. The protein is NADH-ubiquinone oxidoreductase chain 4L (MT-ND4L) of Vampyressa thyone (Northern little yellow-eared bat).